A 1059-amino-acid chain; its full sequence is Transmembrane protease serine 9 (1059 aa).

Residues Met1 to Ala29 are Cytoplasmic-facing. Residues Ser30–Leu50 form a helical; Signal-anchor for type II membrane protein membrane-spanning segment. The Extracellular segment spans residues Ser51 to Glu1059. The LDL-receptor class A domain maps to Arg153 to Glu190. 4 disulfides stabilise this stretch: Cys154/Cys166, Cys161/Cys180, Cys174/Cys189, and Cys228/Cys244. The Peptidase S1 1 domain occupies Ile203–Thr436. Catalysis depends on charge relay system residues His243 and Asp292. 3 disulfides stabilise this stretch: Cys326/Cys393, Cys358/Cys372, and Cys383/Cys412. The active-site Charge relay system is Ser387. The segment at Ala443–Pro469 is disordered. One can recognise a Peptidase S1 2 domain in the interval Val504–Ser736. Cysteines 529 and 545 form a disulfide. His544 functions as the Charge relay system in the catalytic mechanism. Residue Asn547 is glycosylated (N-linked (GlcNAc...) asparagine). Asp592 functions as the Charge relay system in the catalytic mechanism. Disulfide bonds link Cys626–Cys693, Cys658–Cys672, and Cys683–Cys712. N-linked (GlcNAc...) asparagine glycans are attached at residues Asn638 and Asn663. The Charge relay system role is filled by Ser687. The tract at residues Thr758–Leu814 is disordered. Residues Val780–Gly798 are compositionally biased toward polar residues. An N-linked (GlcNAc...) asparagine glycan is attached at Asn786. The Peptidase S1 3 domain maps to Ile827–Gln1058. Cystine bridges form between Cys853–Cys869, Cys949–Cys1015, Cys980–Cys994, and Cys1005–Cys1034.

Belongs to the peptidase S1 family. Proteolytically cleaved to generate 3 independent serine protease chains. The cleaved chains may remain attached to the membrane thanks to disulfide bonds. It is unclear whether cleavage always takes place. In terms of tissue distribution, expressed in fetal human tissues, such as kidney, liver, lung and brain, and in a variety of tumor cell lines. Weakly expressed in adult tissues including skeletal muscle, liver, placenta and heart.

It localises to the cell membrane. Inhibited by serine protease inhibitors PMSF and 4-(2-aminoethyl)benzenesulfonyl fluoride, but not by EDTA. Its function is as follows. Serase-1 and serase-2 are serine proteases that hydrolyze the peptides N-t-Boc-Gln-Ala-Arg-AMC and N-t-Boc-Gln-Gly-Arg-AMC. In contrast, N-t-Boc-Ala-Phe-Lys-AMC and N-t-Boc-Ala-Pro-Ala-AMC are not significantly hydrolyzed. The protein is Transmembrane protease serine 9 (TMPRSS9) of Homo sapiens (Human).